We begin with the raw amino-acid sequence, 353 residues long: Photosystem II protein D1 (353 aa).

N-acetylthreonine is present on T2. A Phosphothreonine modification is found at T2. 3 helical membrane passes run Y29–S46, H118–L133, and W142–A156. H118 serves as a coordination point for chlorophyll a. Y126 contacts pheophytin a. Positions 170 and 189 each coordinate [CaMn4O5] cluster. Residues F197–L218 traverse the membrane as a helical segment. H198 provides a ligand contact to chlorophyll a. A quinone is bound by residues H215 and S264–F265. H215 contacts Fe cation. Fe cation is bound at residue H272. Residues F274–L288 traverse the membrane as a helical segment. Residues H332, E333, D342, and A344 each coordinate [CaMn4O5] cluster. Positions A345 to G353 are excised as a propeptide.

It belongs to the reaction center PufL/M/PsbA/D family. As to quaternary structure, PSII is composed of 1 copy each of membrane proteins PsbA, PsbB, PsbC, PsbD, PsbE, PsbF, PsbH, PsbI, PsbJ, PsbK, PsbL, PsbM, PsbT, PsbX, PsbY, PsbZ, Psb30/Ycf12, at least 3 peripheral proteins of the oxygen-evolving complex and a large number of cofactors. It forms dimeric complexes. The D1/D2 heterodimer binds P680, chlorophylls that are the primary electron donor of PSII, and subsequent electron acceptors. It shares a non-heme iron and each subunit binds pheophytin, quinone, additional chlorophylls, carotenoids and lipids. D1 provides most of the ligands for the Mn4-Ca-O5 cluster of the oxygen-evolving complex (OEC). There is also a Cl(-1) ion associated with D1 and D2, which is required for oxygen evolution. The PSII complex binds additional chlorophylls, carotenoids and specific lipids. is required as a cofactor. Post-translationally, tyr-161 forms a radical intermediate that is referred to as redox-active TyrZ, YZ or Y-Z. C-terminally processed by CTPA; processing is essential to allow assembly of the oxygen-evolving complex and thus photosynthetic growth.

The protein resides in the plastid. Its subcellular location is the chloroplast thylakoid membrane. It catalyses the reaction 2 a plastoquinone + 4 hnu + 2 H2O = 2 a plastoquinol + O2. Functionally, photosystem II (PSII) is a light-driven water:plastoquinone oxidoreductase that uses light energy to abstract electrons from H(2)O, generating O(2) and a proton gradient subsequently used for ATP formation. It consists of a core antenna complex that captures photons, and an electron transfer chain that converts photonic excitation into a charge separation. The D1/D2 (PsbA/PsbD) reaction center heterodimer binds P680, the primary electron donor of PSII as well as several subsequent electron acceptors. The sequence is that of Photosystem II protein D1 from Ceratophyllum demersum (Rigid hornwort).